A 687-amino-acid chain; its full sequence is Epithelial splicing regulatory protein 1 (687 aa).

RRM domains lie at 226 to 303 (TIIR…KATG), 327 to 407 (VIVR…RSTA), and 446 to 526 (DCIR…QCSA).

The protein belongs to the ESRP family.

Its subcellular location is the nucleus. MRNA splicing factor that regulates the formation of epithelial cell-specific isoforms. Specifically regulates the expression of FGFR2-IIIb, an epithelial cell-specific isoform of fgfr2. Acts by directly binding specific sequences in mRNAs. Binds the GU-rich sequence motifs in the ISE/ISS-3, a cis-element regulatory region present in the mRNA of fgfr2. In Xenopus tropicalis (Western clawed frog), this protein is Epithelial splicing regulatory protein 1 (esrp1).